A 620-amino-acid polypeptide reads, in one-letter code: Threonine--tRNA ligase (620 aa).

Positions 1-141 are editing domain; the sequence is MKMLLIHSDY…LSRKIVAKEE (141 aa). Residues 197–496 are catalytic; sequence PHVKFIKEKD…AEKGNAPMLP (300 aa). Positions 289, 341, and 465 each coordinate Zn(2+).

It belongs to the class-II aminoacyl-tRNA synthetase family. As to quaternary structure, homodimer. Zn(2+) serves as cofactor.

Its subcellular location is the cytoplasm. The catalysed reaction is tRNA(Thr) + L-threonine + ATP = L-threonyl-tRNA(Thr) + AMP + diphosphate + H(+). With respect to regulation, not inhibited by 1 uM borrelidin (BN); probably does not bind BN. In terms of biological role, catalyzes the attachment of threonine to tRNA(Thr) in a two-step reaction: L-threonine is first activated by ATP to form Thr-AMP and then transferred to the acceptor end of tRNA(Thr). Also activates L-serine, but does not detectably transfer it to tRNA(Thr). Edits incorrectly charged L-seryl-tRNA(Thr) via its editing domain. Has no activity on correctly acylated L-seryl-tRNA(Ser) or L-threonyl-tRNA(Thr). Deacylates correctly charged glycyl-tRNA(Gly), but not glycyl-tRNA(Gly)(2'-dA76) (the terminal 2'-OH of tRNA adenine 76 has been dehydroxylated) nor the 2'-fluoro tRNA derivative, strongly suggesting the editing function is tRNA catalyzed. This Methanocaldococcus jannaschii (strain ATCC 43067 / DSM 2661 / JAL-1 / JCM 10045 / NBRC 100440) (Methanococcus jannaschii) protein is Threonine--tRNA ligase.